Reading from the N-terminus, the 94-residue chain is Large ribosomal subunit protein bL27 (94 aa).

A propeptide spanning residues 1-9 is cleaved from the precursor; it reads MNLANLQLF. The disordered stretch occupies residues 11 to 34; sequence HKKGGGSTSNGRDSQAKRLGAKAA.

The protein belongs to the bacterial ribosomal protein bL27 family. The N-terminus is cleaved by ribosomal processing cysteine protease Prp.

This chain is Large ribosomal subunit protein bL27, found in Streptococcus pyogenes serotype M3 (strain ATCC BAA-595 / MGAS315).